A 710-amino-acid polypeptide reads, in one-letter code: Methionine--tRNA ligase (710 aa).

The short motif at 16-26 (PYANGAFHIGH) is the 'HIGH' region element. Zn(2+) is bound by residues cysteine 147, cysteine 150, cysteine 160, and cysteine 163. Residues 350–354 (KMSKS) carry the 'KMSKS' region motif. Lysine 353 is a binding site for ATP. In terms of domain architecture, tRNA-binding spans 604-710 (DFAKIDLRIA…PGAEPGMRVG (107 aa)).

This sequence belongs to the class-I aminoacyl-tRNA synthetase family. MetG type 1 subfamily. Homodimer. It depends on Zn(2+) as a cofactor.

The protein localises to the cytoplasm. The enzyme catalyses tRNA(Met) + L-methionine + ATP = L-methionyl-tRNA(Met) + AMP + diphosphate. Functionally, is required not only for elongation of protein synthesis but also for the initiation of all mRNA translation through initiator tRNA(fMet) aminoacylation. This chain is Methionine--tRNA ligase, found in Herminiimonas arsenicoxydans.